A 155-amino-acid polypeptide reads, in one-letter code: Large ribosomal subunit protein eL24 (155 aa).

The segment at 119-155 (VKAAKKAAAPAPAKKSAPKQKAAKVTQKAAPRVGGKR) is disordered. The span at 124–133 (KAAAPAPAKK) shows a compositional bias: low complexity.

This sequence belongs to the eukaryotic ribosomal protein eL24 family.

This Drosophila melanogaster (Fruit fly) protein is Large ribosomal subunit protein eL24 (RpL24).